Consider the following 470-residue polypeptide: Sugar transporter ESL1 (470 aa).

The Essential for the localization to the vacuole membrane motif lies at 10–16; the sequence is LEAGLLL. 12 helical membrane passes run 28 to 48, 68 to 88, 99 to 119, 130 to 150, 157 to 177, 186 to 206, 268 to 288, 303 to 323, 332 to 352, 368 to 388, 404 to 424, and 430 to 450; these read ITAV…CFGC, VAQY…GAIF, KGTM…VALA, LSTG…IAEI, GAFV…FYVI, LALI…FIPE, VVIG…GLMY, IGSM…LILV, LLAS…SFCF, IGVV…PWII, LVTL…NFML, and GTFL…YAMV.

This sequence belongs to the major facilitator superfamily. Sugar transporter (TC 2.A.1.1) family. As to expression, expressed in both shoots and roots. In roots, strongly expressed in pericycle and xylem parenchyma cells, and to a lesser extent in the root endodermis. In flowers, expressed in sepals.

The protein resides in the vacuole membrane. The protein localises to the vesicle. Its function is as follows. Sugar transporter. Transports monosaccharides across the vacuolar membrane independently from a proton gradient. May function coordinately with the vacuolar invertase to regulate osmotic pressure by affecting the accumulation of sugar in the cells under abiotic stress conditions. The polypeptide is Sugar transporter ESL1 (Arabidopsis thaliana (Mouse-ear cress)).